The sequence spans 349 residues: 11-beta-hydroxysteroid dehydrogenase A (349 aa).

A helical; Signal-anchor for type II membrane protein membrane pass occupies residues 10–30 (LVAPPFTFFFLCLFLPPYWGL). The Proline-knob motif lies at 13–26 (PPFTFFFLCLFLPP). Residues 54 to 80 (GASS…SARR), Asp-105, and 132 to 135 (NAAI) each bind NADP(+). Ser-184 lines the substrate pocket. The Proton acceptor role is filled by Tyr-197. NADP(+) contacts are provided by residues 197–201 (YSASK) and Lys-201.

The protein belongs to the short-chain dehydrogenases/reductases (SDR) family. Expressed in seeds (at protein level).

The protein resides in the lipid droplet. The protein localises to the membrane. The enzyme catalyses an 11beta-hydroxysteroid + NADP(+) = an 11-oxosteroid + NADPH + H(+). Its function is as follows. Has dehydrogenase activity against 11 beta-hydroxysteroid and 17 beta-hydroxysteroid. May be involved in signal transduction regulated by various sterols. The polypeptide is 11-beta-hydroxysteroid dehydrogenase A (Arachis hypogaea (Peanut)).